We begin with the raw amino-acid sequence, 284 residues long: Probable endonuclease 4 (284 aa).

Zn(2+)-binding residues include His69, His109, Glu145, Asp179, His182, His216, Asp229, His231, and Glu261.

Belongs to the AP endonuclease 2 family. The cofactor is Zn(2+).

It carries out the reaction Endonucleolytic cleavage to 5'-phosphooligonucleotide end-products.. Endonuclease IV plays a role in DNA repair. It cleaves phosphodiester bonds at apurinic or apyrimidinic (AP) sites, generating a 3'-hydroxyl group and a 5'-terminal sugar phosphate. The chain is Probable endonuclease 4 from Klebsiella pneumoniae subsp. pneumoniae (strain ATCC 700721 / MGH 78578).